The primary structure comprises 214 residues: rRNA methyltransferase 2, mitochondrial (214 aa).

Residues 1 to 18 (MFSTKKSQGNLHKYIQRQ) constitute a mitochondrion transit peptide. S-adenosyl-L-methionine contacts are provided by residues 63–66 (PGSW), Asp83, 100–101 (DI), and Asp125. Catalysis depends on Lys169, which acts as the Proton acceptor.

Belongs to the class I-like SAM-binding methyltransferase superfamily. RNA methyltransferase RlmE family.

Its subcellular location is the mitochondrion. It catalyses the reaction a uridine in rRNA + S-adenosyl-L-methionine = a 2'-O-methyluridine in rRNA + S-adenosyl-L-homocysteine + H(+). S-adenosyl-L-methionine-dependent 2'-O-ribose methyltransferase that catalyzes the formation of 2'-O-methyluridine at position 808 (Um808) in the mitochondrial large subunit ribosomal RNA (mtLSU rRNA), a universally conserved modification in the peptidyl transferase domain of the mtLSU rRNA. This activity may require prior 2'-O-methylguanosine modification at position 809 (Gm809) by MRM3. Essential for late-stage assembly of mtLSU required for efficient translation of mitochondrial DNA encoded proteins; methyltransferase activity is not required for this function. Essential for mitochondrial respiratory function. The sequence is that of rRNA methyltransferase 2, mitochondrial from Caenorhabditis elegans.